The sequence spans 90 residues: Lectin-1 (90 aa).

A Pyrrolidone carboxylic acid modification is found at Gln-1. Cys-46 and Cys-71 are oxidised to a cystine.

In terms of processing, the N-terminus is blocked. Post-translationally, contains seven disulfide bonds. Proteolytically cleaved. Major mature form may consist of cleaved, disulfide-bonded N-terminal and C-terminal chains.

In terms of biological role, lectin with specificity for complex N-linked glycans and O-linked glycans. Has hemagglutinating activity towards rabbit erythrocytes. The polypeptide is Lectin-1 (Hypnea musciformis (Red alga)).